The chain runs to 23 residues: GFGEDIAMKQHQVNSLLDILFVF.

The protein belongs to the tyrosinase family. Hemocyanin subfamily. Hemolymph.

The protein resides in the secreted. It is found in the extracellular space. In terms of biological role, hemocyanins are copper-containing oxygen carriers occurring freely dissolved in the hemolymph of many mollusks and arthropods. In Carcinus maenas (Common shore crab), this protein is Hemocyanin subunit 4.